The following is a 272-amino-acid chain: Dermonecrotic toxin LvSicTox-alphaIC1bi (272 aa).

Residue H5 is part of the active site. Residues E25 and D27 each contribute to the Mg(2+) site. Residue H41 is the Nucleophile of the active site. 2 disulfides stabilise this stretch: C45-C51 and C47-C189. D84 contacts Mg(2+).

This sequence belongs to the arthropod phospholipase D family. Class II subfamily. Requires Mg(2+) as cofactor. Expressed by the venom gland.

Its subcellular location is the secreted. It catalyses the reaction an N-(acyl)-sphingosylphosphocholine = an N-(acyl)-sphingosyl-1,3-cyclic phosphate + choline. The catalysed reaction is an N-(acyl)-sphingosylphosphoethanolamine = an N-(acyl)-sphingosyl-1,3-cyclic phosphate + ethanolamine. It carries out the reaction a 1-acyl-sn-glycero-3-phosphocholine = a 1-acyl-sn-glycero-2,3-cyclic phosphate + choline. The enzyme catalyses a 1-acyl-sn-glycero-3-phosphoethanolamine = a 1-acyl-sn-glycero-2,3-cyclic phosphate + ethanolamine. Its function is as follows. Dermonecrotic toxins cleave the phosphodiester linkage between the phosphate and headgroup of certain phospholipids (sphingolipid and lysolipid substrates), forming an alcohol (often choline) and a cyclic phosphate. This toxin acts on sphingomyelin (SM). It may also act on ceramide phosphoethanolamine (CPE), lysophosphatidylcholine (LPC) and lysophosphatidylethanolamine (LPE), but not on lysophosphatidylserine (LPS), and lysophosphatidylglycerol (LPG). It acts by transphosphatidylation, releasing exclusively cyclic phosphate products as second products. Induces dermonecrosis, hemolysis, increased vascular permeability, edema, inflammatory response, and platelet aggregation. The protein is Dermonecrotic toxin LvSicTox-alphaIC1bi of Loxosceles variegata (Recluse spider).